The primary structure comprises 402 residues: Deacetylase Oant_2987 (402 aa).

Positions 70, 72, 168, 201, 224, and 284 each coordinate Zn(2+). At lysine 168 the chain carries N6-carboxylysine.

The protein belongs to the metallo-dependent hydrolases superfamily. Atu3266/EF_0837 deacetylase family. Zn(2+) is required as a cofactor.

In terms of biological role, esterase that catalyzes the deacetylation of acetyl-(R)-mandelate (in vitro). Can also hydrolyze acetyl glycolate, but with lower efficiency. Has very low N-acetyl-D-amino acid deacetylase activity with N-acetyl-D-serine and N-acetyl-D-threonine (in vitro). Theoretical substrate docking studies suggest that other N-acetylated amino acids may optimally occupy the active site and may in fact be the physiological substrates. This chain is Deacetylase Oant_2987, found in Brucella anthropi (strain ATCC 49188 / DSM 6882 / CCUG 24695 / JCM 21032 / LMG 3331 / NBRC 15819 / NCTC 12168 / Alc 37) (Ochrobactrum anthropi).